Consider the following 343-residue polypeptide: 4-hydroxy-2-oxovalerate aldolase 4 (343 aa).

One can recognise a Pyruvate carboxyltransferase domain in the interval 8–260; sequence VTVHDMTLRD…ETGVDVAKIT (253 aa). 16–17 serves as a coordination point for substrate; that stretch reads RD. Asp-17 contacts Mn(2+). His-20 functions as the Proton acceptor in the catalytic mechanism. Residues Ser-170 and His-199 each contribute to the substrate site. Residues His-199 and His-201 each coordinate Mn(2+). Tyr-290 is a substrate binding site.

Belongs to the 4-hydroxy-2-oxovalerate aldolase family.

The catalysed reaction is (S)-4-hydroxy-2-oxopentanoate = acetaldehyde + pyruvate. This Dechloromonas aromatica (strain RCB) protein is 4-hydroxy-2-oxovalerate aldolase 4.